We begin with the raw amino-acid sequence, 364 residues long: UDP-N-acetylglucosamine--N-acetylmuramyl-(pentapeptide) pyrophosphoryl-undecaprenol N-acetylglucosamine transferase (364 aa).

UDP-N-acetyl-alpha-D-glucosamine contacts are provided by residues 10–12 (TGG), Asn-128, Arg-170, Ser-199, Ile-250, and Gln-295.

It belongs to the glycosyltransferase 28 family. MurG subfamily.

The protein resides in the cell inner membrane. It carries out the reaction di-trans,octa-cis-undecaprenyl diphospho-N-acetyl-alpha-D-muramoyl-L-alanyl-D-glutamyl-meso-2,6-diaminopimeloyl-D-alanyl-D-alanine + UDP-N-acetyl-alpha-D-glucosamine = di-trans,octa-cis-undecaprenyl diphospho-[N-acetyl-alpha-D-glucosaminyl-(1-&gt;4)]-N-acetyl-alpha-D-muramoyl-L-alanyl-D-glutamyl-meso-2,6-diaminopimeloyl-D-alanyl-D-alanine + UDP + H(+). Its pathway is cell wall biogenesis; peptidoglycan biosynthesis. In terms of biological role, cell wall formation. Catalyzes the transfer of a GlcNAc subunit on undecaprenyl-pyrophosphoryl-MurNAc-pentapeptide (lipid intermediate I) to form undecaprenyl-pyrophosphoryl-MurNAc-(pentapeptide)GlcNAc (lipid intermediate II). The sequence is that of UDP-N-acetylglucosamine--N-acetylmuramyl-(pentapeptide) pyrophosphoryl-undecaprenol N-acetylglucosamine transferase from Chlorobium limicola (strain DSM 245 / NBRC 103803 / 6330).